A 766-amino-acid chain; its full sequence is MALAHTLGFPRIGRDRELKKAQEAFWKGELDEAGLRAVGRQLRAAHWQVQKDAGIQLLPVGDFAWYDQVLTHSLTFGVIPERFRAHGEAGPTLHTLFGMARGVSDDSCCGGAHAQEMTKWFDTNYHYLVPEFSADQQFQLSWEQLFEEVDEARALGHQVKPVLIGPLTYLWLGKAKGAEFDRLDLLDRLLPLYGQILRRLAGQGVEWVQIDEPILVLDLPQAWKNAFERAYNLLQSEPLKKLVATYFGGLEDNLGLAANLPVDGLHIDLVRAPEQYPSILDRLPAYKVVSLGLVNGRNVWRCDLEKALEVVRHARERLGERLWVAPSCSLLHSPVDLEREDGLDAELKSWLAFAVQKCREVAVLARAATEPEAAEVLAALEESRAVQASRASSPRIHKPAVQARLAAIKASDAQRRSPFAERIARQRAGLDLPAFPTTTIGSFPQTSSIRLARQSFKQGKLSEAEYIEAMHSEIRHAVQIQEQLGLDVLVHGEAERNDMVEYFAEQLDGYVFTRFGWVQSYGSRCVKPAVIYGDLSRPRAMTVEWIRYAQSLTDKVMKGMLTGPVTMLMWSFPREDVSREVQARQLALAIRDEVVDLEAAGIRIVQIDEAAFREGLPLRRNAWPHYLEWATEAFRLCASGVRDETQIHTHMCYSEFNDVIESIAAMDADVITIETSRSDMELLEAFEQFDYPNEIGPGVYDIHSPRVPSREEIVALLRKAARRIPAERLWVNPDCGLKTRAWPETEAALVNMVAAARELRGDLARG.

5-methyltetrahydropteroyltri-L-glutamate-binding positions include 16-19 (RELK) and K119. Residues 440-442 (IGS) and E493 each bind L-homocysteine. L-methionine contacts are provided by residues 440-442 (IGS) and E493. 5-methyltetrahydropteroyltri-L-glutamate contacts are provided by residues 524-525 (RC) and W570. D608 provides a ligand contact to L-homocysteine. An L-methionine-binding site is contributed by D608. E614 serves as a coordination point for 5-methyltetrahydropteroyltri-L-glutamate. Positions 650, 652, and 674 each coordinate Zn(2+). The active-site Proton donor is H703. Position 735 (C735) interacts with Zn(2+).

Belongs to the vitamin-B12 independent methionine synthase family. It depends on Zn(2+) as a cofactor.

The enzyme catalyses 5-methyltetrahydropteroyltri-L-glutamate + L-homocysteine = tetrahydropteroyltri-L-glutamate + L-methionine. It participates in amino-acid biosynthesis; L-methionine biosynthesis via de novo pathway; L-methionine from L-homocysteine (MetE route): step 1/1. Functionally, catalyzes the transfer of a methyl group from 5-methyltetrahydrofolate to homocysteine resulting in methionine formation. The polypeptide is 5-methyltetrahydropteroyltriglutamate--homocysteine methyltransferase (Pseudomonas aeruginosa (strain UCBPP-PA14)).